Reading from the N-terminus, the 49-residue chain is Large ribosomal subunit protein bL33A (49 aa).

Belongs to the bacterial ribosomal protein bL33 family.

The sequence is that of Large ribosomal subunit protein bL33A from Staphylococcus aureus (strain Mu3 / ATCC 700698).